The chain runs to 229 residues: NAD(P)H-hydrate epimerase (229 aa).

In terms of domain architecture, YjeF N-terminal spans 9-216 (AISVDEELFN…KLEEKYAMNL (208 aa)). (6S)-NADPHX is bound at residue 59–63 (NNGGD). Residues N60 and D124 each contribute to the K(+) site. (6S)-NADPHX-binding positions include 128–134 (GFSFKPP) and D157. S160 serves as a coordination point for K(+).

This sequence belongs to the NnrE/AIBP family. The cofactor is K(+).

The catalysed reaction is (6R)-NADHX = (6S)-NADHX. It carries out the reaction (6R)-NADPHX = (6S)-NADPHX. Catalyzes the epimerization of the S- and R-forms of NAD(P)HX, a damaged form of NAD(P)H that is a result of enzymatic or heat-dependent hydration. This is a prerequisite for the S-specific NAD(P)H-hydrate dehydratase to allow the repair of both epimers of NAD(P)HX. The chain is NAD(P)H-hydrate epimerase from Anopheles gambiae (African malaria mosquito).